A 541-amino-acid polypeptide reads, in one-letter code: Mesoderm induction early response protein 2 (541 aa).

Position 11 is a phosphoserine (Ser11). Disordered stretches follow at residues 100-119 (DPIS…LPDM) and 131-186 (LSGE…EEDA). Polar residues predominate over residues 140 to 165 (QSSADDLTPSVTSHEASDLFHNQSGS). The region spanning 194–291 (KEIMVGPQFQ…EALRRLRFNV (98 aa)) is the ELM2 domain. The SANT domain maps to 296 to 348 (DGLCAWSEEECRNFEHGFRVHGKNFHLIQANKVRTRSVGECVEYYYLWKKSER). The interval 364–440 (VSSGTTDTEQ…EPPAVPSLQQ (77 aa)) is disordered.

In terms of assembly, part of a complex containing at least CDYL, MIER1, MIER2, HDAC1 and HDAC2.

The protein localises to the nucleus. Transcriptional repressor. This Mus musculus (Mouse) protein is Mesoderm induction early response protein 2 (Mier2).